Reading from the N-terminus, the 289-residue chain is ATP synthase subunit a (289 aa).

6 consecutive transmembrane segments (helical) span residues 43–63 (AFHV…VLIF), 101–121 (SAVI…MNAV), 160–180 (LSVF…GGFI), 193–213 (LFVQ…TLIA), 232–252 (VFIL…GLGV), and 259–279 (AVFH…LTIV).

This sequence belongs to the ATPase A chain family. As to quaternary structure, F-type ATPases have 2 components, CF(1) - the catalytic core - and CF(0) - the membrane proton channel. CF(1) has five subunits: alpha(3), beta(3), gamma(1), delta(1), epsilon(1). CF(0) has three main subunits: a(1), b(2) and c(9-12). The alpha and beta chains form an alternating ring which encloses part of the gamma chain. CF(1) is attached to CF(0) by a central stalk formed by the gamma and epsilon chains, while a peripheral stalk is formed by the delta and b chains.

Its subcellular location is the cell inner membrane. Functionally, key component of the proton channel; it plays a direct role in the translocation of protons across the membrane. In Pseudomonas savastanoi pv. phaseolicola (strain 1448A / Race 6) (Pseudomonas syringae pv. phaseolicola (strain 1448A / Race 6)), this protein is ATP synthase subunit a.